A 239-amino-acid chain; its full sequence is Fatty acid metabolism regulator protein (239 aa).

Positions 6-74 constitute an HTH gntR-type domain; it reads QSPAGFAEEY…HGKPTKVNNF (69 aa). Residues 34–53 constitute a DNA-binding region (H-T-H motif); sequence ERELSELIGVTRTTLREVLQ.

As to quaternary structure, homodimer.

The protein resides in the cytoplasm. Multifunctional regulator of fatty acid metabolism. The protein is Fatty acid metabolism regulator protein of Escherichia fergusonii (strain ATCC 35469 / DSM 13698 / CCUG 18766 / IAM 14443 / JCM 21226 / LMG 7866 / NBRC 102419 / NCTC 12128 / CDC 0568-73).